Reading from the N-terminus, the 181-residue chain is 6,7-dimethyl-8-ribityllumazine synthase (181 aa).

5-amino-6-(D-ribitylamino)uracil is bound by residues F23, 61 to 63 (SFE), and 85 to 87 (AVI). Residue 90 to 91 (QT) coordinates (2S)-2-hydroxy-3-oxobutyl phosphate. H93 serves as the catalytic Proton donor. F118 is a 5-amino-6-(D-ribitylamino)uracil binding site. (2S)-2-hydroxy-3-oxobutyl phosphate is bound at residue R132.

It belongs to the DMRL synthase family.

The enzyme catalyses (2S)-2-hydroxy-3-oxobutyl phosphate + 5-amino-6-(D-ribitylamino)uracil = 6,7-dimethyl-8-(1-D-ribityl)lumazine + phosphate + 2 H2O + H(+). The protein operates within cofactor biosynthesis; riboflavin biosynthesis; riboflavin from 2-hydroxy-3-oxobutyl phosphate and 5-amino-6-(D-ribitylamino)uracil: step 1/2. Functionally, catalyzes the formation of 6,7-dimethyl-8-ribityllumazine by condensation of 5-amino-6-(D-ribitylamino)uracil with 3,4-dihydroxy-2-butanone 4-phosphate. This is the penultimate step in the biosynthesis of riboflavin. This is 6,7-dimethyl-8-ribityllumazine synthase from Synechococcus elongatus (strain ATCC 33912 / PCC 7942 / FACHB-805) (Anacystis nidulans R2).